The sequence spans 147 residues: DNA-directed RNA polymerase I subunit rpa14 (147 aa).

The segment at 71-147 (VQGPPTEELI…TQGVGEKEQS (77 aa)) is disordered. Over residues 74 to 84 (PPTEELIIPPE) the composition is skewed to low complexity. Over residues 87–111 (LETKEEESLKHAREENDDLHLDKET) the composition is skewed to basic and acidic residues. Residues 112–124 (KKRLKKEKKKAAR) are compositionally biased toward basic residues. Over residues 125-135 (REKEEARKAKA) the composition is skewed to basic and acidic residues.

In terms of assembly, component of the RNA polymerase I (Pol I) complex consisting of 14 subunits. Part of a Pol I subcomplex consisting of the subunits A14 and A43. Interacts with rpa43. Phosphorylated.

Its subcellular location is the nucleus. It localises to the nucleolus. Its function is as follows. DNA-dependent RNA polymerase catalyzes the transcription of DNA into RNA using the four ribonucleoside triphosphates as substrates. Component of RNA polymerase I which synthesizes ribosomal RNA precursors. A14 seems to play a role in the stability of Pol I subunit A43 and association of rrn3 to Pol I. The protein is DNA-directed RNA polymerase I subunit rpa14 (ker1) of Schizosaccharomyces pombe (strain 972 / ATCC 24843) (Fission yeast).